Here is a 69-residue protein sequence, read N- to C-terminus: UPF0337 protein YjbJ (69 aa).

This sequence belongs to the UPF0337 (CsbD) family.

In Escherichia coli O6:H1 (strain CFT073 / ATCC 700928 / UPEC), this protein is UPF0337 protein YjbJ (yjbJ).